The primary structure comprises 116 residues: Nucleoid-associated protein EUBELI_02017 (116 aa).

Positions 1–12 (MAKRGGFPGGMP) are enriched in gly residues. Positions 1 to 42 (MAKRGGFPGGMPGNMNNLMKQAQRMQRQMEEQQAELENKEFS) are disordered. Residues 13-26 (GNMNNLMKQAQRMQ) show a composition bias toward low complexity.

The protein belongs to the YbaB/EbfC family. In terms of assembly, homodimer.

Its subcellular location is the cytoplasm. It is found in the nucleoid. Its function is as follows. Binds to DNA and alters its conformation. May be involved in regulation of gene expression, nucleoid organization and DNA protection. This chain is Nucleoid-associated protein EUBELI_02017, found in Lachnospira eligens (strain ATCC 27750 / DSM 3376 / VPI C15-48 / C15-B4) (Eubacterium eligens).